A 218-amino-acid chain; its full sequence is Thiopurine S-methyltransferase (218 aa).

The S-adenosyl-L-methionine site is built by Trp10, Leu45, Glu66, and Arg123.

Belongs to the class I-like SAM-binding methyltransferase superfamily. TPMT family.

The protein localises to the cytoplasm. The catalysed reaction is S-adenosyl-L-methionine + a thiopurine = S-adenosyl-L-homocysteine + a thiopurine S-methylether.. The protein is Thiopurine S-methyltransferase of Shewanella amazonensis (strain ATCC BAA-1098 / SB2B).